Consider the following 137-residue polypeptide: uncharacterized protein (137 aa).

This is an uncharacterized protein from Escherichia coli (strain K12).